The primary structure comprises 99 residues: MTNQIEKELIEKVAKLSNLKLKEEEIELFSNQFKDILSFIDKLNEVDVKDTLPFYELQIEEKSEREDIPTGSITNEEAIKNAPQAKGGFFVVPRVVGEE.

Belongs to the GatC family. Heterotrimer of A, B and C subunits.

It carries out the reaction L-glutamyl-tRNA(Gln) + L-glutamine + ATP + H2O = L-glutaminyl-tRNA(Gln) + L-glutamate + ADP + phosphate + H(+). It catalyses the reaction L-aspartyl-tRNA(Asn) + L-glutamine + ATP + H2O = L-asparaginyl-tRNA(Asn) + L-glutamate + ADP + phosphate + 2 H(+). Its function is as follows. Allows the formation of correctly charged Asn-tRNA(Asn) or Gln-tRNA(Gln) through the transamidation of misacylated Asp-tRNA(Asn) or Glu-tRNA(Gln) in organisms which lack either or both of asparaginyl-tRNA or glutaminyl-tRNA synthetases. The reaction takes place in the presence of glutamine and ATP through an activated phospho-Asp-tRNA(Asn) or phospho-Glu-tRNA(Gln). This Sulfurihydrogenibium sp. (strain YO3AOP1) protein is Aspartyl/glutamyl-tRNA(Asn/Gln) amidotransferase subunit C.